Consider the following 343-residue polypeptide: Geranylgeranyl pyrophosphate synthase 1 (343 aa).

Residues lysine 43, arginine 46, and histidine 75 each coordinate isopentenyl diphosphate. Mg(2+) contacts are provided by aspartate 82 and aspartate 86. A dimethylallyl diphosphate-binding site is contributed by arginine 91. Arginine 92 is a binding site for isopentenyl diphosphate. Dimethylallyl diphosphate is bound by residues lysine 169, threonine 170, and glutamine 212. Residue aspartate 215 coordinates Mg(2+). The dimethylallyl diphosphate site is built by asparagine 219, lysine 229, and lysine 239.

The protein belongs to the FPP/GGPP synthase family. Mg(2+) is required as a cofactor.

The enzyme catalyses isopentenyl diphosphate + dimethylallyl diphosphate = (2E)-geranyl diphosphate + diphosphate. The catalysed reaction is isopentenyl diphosphate + (2E)-geranyl diphosphate = (2E,6E)-farnesyl diphosphate + diphosphate. It carries out the reaction isopentenyl diphosphate + (2E,6E)-farnesyl diphosphate = (2E,6E,10E)-geranylgeranyl diphosphate + diphosphate. In terms of biological role, geranylgeranyl pyrophosphate synthase; part of the gene cluster 4 that mediates the biosynthesis of an isoprenoid secondary metabolite. The chain is Geranylgeranyl pyrophosphate synthase 1 (GGS1) from Zymoseptoria tritici (strain CBS 115943 / IPO323) (Speckled leaf blotch fungus).